A 436-amino-acid polypeptide reads, in one-letter code: MSERQQLTNARGERIAIVSGLRTPFAKQATAFHGVSALDMGKMVVNELISRSELDPKLIEQLVYGQVVQMPAAPNIAREIVLGTGMDISTDAYSVTRACATSFQSTVNVAESILTGNMEIGIAGGSDSSSVLPIGVSKKLAHALVDLNKARSFGQKLSIFRRLGLKDLLPVPPAVAEYSTGLSMGQTAEQMAKTYNISRADQDALAHRSHTLATETWNAGKLAEEVMAAHVPPYKAFIDRDNNIRENSKLESYAKLRPAFDRKHGSVTAANSTPLTDGASAVLLMSEGRAKALGYTPIGYIKSYAFTAIDVWEDMLMGPSYATPMALKRAGMELEDLTLIEMHEAFAAQTLANMQMFGSKKFAEEKLGRNRAIGEIDMSKFNVLGGSLAYGHPFAATGTRLITQVCHELKRRGGGTGLATACAAGGLGAAMIVEVE.

Cysteine 99 serves as the catalytic Acyl-thioester intermediate. Active-site proton acceptor residues include histidine 392 and cysteine 422.

It belongs to the thiolase-like superfamily. Thiolase family. As to quaternary structure, heterotetramer of two alpha chains (FadJ) and two beta chains (FadI).

The protein localises to the cytoplasm. It carries out the reaction an acyl-CoA + acetyl-CoA = a 3-oxoacyl-CoA + CoA. The protein operates within lipid metabolism; fatty acid beta-oxidation. Functionally, catalyzes the final step of fatty acid oxidation in which acetyl-CoA is released and the CoA ester of a fatty acid two carbons shorter is formed. In Shewanella piezotolerans (strain WP3 / JCM 13877), this protein is 3-ketoacyl-CoA thiolase.